Reading from the N-terminus, the 388-residue chain is 4-hydroxy-tetrahydrodipicolinate synthase 1, chloroplastic (388 aa).

Residues 1-51 form a disordered region; the sequence is MPYLQPPRPHPHPHPTSRLSRASPPSPFPFFPAGTSRSGRLQPVPVSGHSA. A chloroplast-targeting transit peptide spans 1–62; sequence MPYLQPPRPH…RVSKGKFAVA (62 aa). T131 is a binding site for pyruvate. The active-site Proton donor/acceptor is Y217. The active-site Schiff-base intermediate with substrate is K245. I284 is a pyruvate binding site.

The protein belongs to the DapA family. As to quaternary structure, tetramer of modified subunits derived from two genes in different combinations.

It is found in the plastid. The protein resides in the chloroplast. The enzyme catalyses L-aspartate 4-semialdehyde + pyruvate = (2S,4S)-4-hydroxy-2,3,4,5-tetrahydrodipicolinate + H2O + H(+). The protein operates within amino-acid biosynthesis; L-lysine biosynthesis via DAP pathway; (S)-tetrahydrodipicolinate from L-aspartate: step 3/4. With respect to regulation, sensitive to lysine inhibition. This inhibition increase in an allosteric manner with increasing concentration of the inhibitor. Its function is as follows. Catalyzes the condensation of (S)-aspartate-beta-semialdehyde [(S)-ASA] and pyruvate to 4-hydroxy-tetrahydrodipicolinate (HTPA). The sequence is that of 4-hydroxy-tetrahydrodipicolinate synthase 1, chloroplastic from Triticum aestivum (Wheat).